The sequence spans 32 residues: Photosystem II reaction center protein T (32 aa).

A helical membrane pass occupies residues 3-23 (ALVYTFLLIGTLMVIFFAVFF).

The protein belongs to the PsbT family. PSII is composed of 1 copy each of membrane proteins PsbA, PsbB, PsbC, PsbD, PsbE, PsbF, PsbH, PsbI, PsbJ, PsbK, PsbL, PsbM, PsbT, PsbX, PsbY, PsbZ, Psb30/Ycf12, at least 3 peripheral proteins of the oxygen-evolving complex and a large number of cofactors. It forms dimeric complexes.

The protein localises to the plastid. It localises to the chloroplast thylakoid membrane. In terms of biological role, found at the monomer-monomer interface of the photosystem II (PS II) dimer, plays a role in assembly and dimerization of PSII. PSII is a light-driven water plastoquinone oxidoreductase, using light energy to abstract electrons from H(2)O, generating a proton gradient subsequently used for ATP formation. This Trieres chinensis (Marine centric diatom) protein is Photosystem II reaction center protein T.